Consider the following 161-residue polypeptide: Cyclic pyranopterin monophosphate synthase (161 aa).

Substrate is bound by residues 75–77 and 115–116; these read MCH and ME. D130 is an active-site residue.

The protein belongs to the MoaC family. In terms of assembly, homohexamer; trimer of dimers.

The catalysed reaction is (8S)-3',8-cyclo-7,8-dihydroguanosine 5'-triphosphate = cyclic pyranopterin phosphate + diphosphate. Its pathway is cofactor biosynthesis; molybdopterin biosynthesis. Catalyzes the conversion of (8S)-3',8-cyclo-7,8-dihydroguanosine 5'-triphosphate to cyclic pyranopterin monophosphate (cPMP). The polypeptide is Cyclic pyranopterin monophosphate synthase (Bacillus cereus (strain ATCC 10987 / NRS 248)).